Consider the following 333-residue polypeptide: D-2-hydroxyacid dehydrogenase (NAD+) (333 aa).

Residue Tyr100 coordinates 4-methyl-2-oxopentanoate. NAD(+)-binding residues include His155, Ile156, Asp175, Val205, Asn211, Thr232, Arg234, and Asp258. Arg234 is an active-site residue. Residue Glu263 is part of the active site. Residue His295 coordinates 4-methyl-2-oxopentanoate. The Proton donor role is filled by His295.

It belongs to the D-isomer specific 2-hydroxyacid dehydrogenase family. In terms of assembly, homodimer.

The catalysed reaction is a (2R)-2-hydroxycarboxylate + NAD(+) = a 2-oxocarboxylate + NADH + H(+). It catalyses the reaction (2R)-hydroxy-4-methylpentanoate + NAD(+) = 4-methyl-2-oxopentanoate + NADH + H(+). It carries out the reaction (R)-3-phenyllactate + NAD(+) = 3-phenylpyruvate + NADH + H(+). Completely inhibited In the presence of 0.1 mM Hg(2+). No influence on the activity could be detected with Mg(2+) and Ca(2+) and only very weak effects with Cd(2+), Co(2+) and Mn(2+). Reducing agents and thiol group reagents do not affect catalytic activity. Functionally, catalyzes the NADH-dependent reversible reduction of various 2-ketocarboxylic acids to the corresponding D-2-hydroxycarboxylic acids. In vitro can use various substrates, including 4-methyl-2-oxopentanoate (2-oxoisocaproate), 2-oxopentanoate, 2-oxohexanoate and phenylpyruvate. The polypeptide is D-2-hydroxyacid dehydrogenase (NAD+) (Lacticaseibacillus paracasei (Lactobacillus paracasei)).